Consider the following 157-residue polypeptide: Trafficking protein particle complex subunit 6b (157 aa).

The protein belongs to the TRAPP small subunits family. BET3 subfamily. As to quaternary structure, homodimer. Part of a TRAPP complex.

It localises to the golgi apparatus. The protein localises to the cis-Golgi network. The protein resides in the endoplasmic reticulum. Its function is as follows. Component of a transport protein particle (TRAPP) complex that may function in specific stages of inter-organelle traffic. Specifically involved in the early development of neural circuitry, likely by controlling the frequency and amplitude of intracellular calcium transients implicated in the regulation of neuron differentiation and survival. This chain is Trafficking protein particle complex subunit 6b, found in Danio rerio (Zebrafish).